The sequence spans 264 residues: Phosphate import ATP-binding protein PstB (264 aa).

One can recognise an ABC transporter domain in the interval 11–250; it reads LKAEALSVYY…DTTEKIFDSP (240 aa). Residue 43–50 participates in ATP binding; the sequence is GPSGCGKS.

The protein belongs to the ABC transporter superfamily. Phosphate importer (TC 3.A.1.7) family. As to quaternary structure, the complex is composed of two ATP-binding proteins (PstB), two transmembrane proteins (PstC and PstA) and a solute-binding protein (PstS).

It localises to the cell inner membrane. The catalysed reaction is phosphate(out) + ATP + H2O = ADP + 2 phosphate(in) + H(+). In terms of biological role, part of the ABC transporter complex PstSACB involved in phosphate import. Responsible for energy coupling to the transport system. The sequence is that of Phosphate import ATP-binding protein PstB from Synechococcus elongatus (strain ATCC 33912 / PCC 7942 / FACHB-805) (Anacystis nidulans R2).